A 309-amino-acid chain; its full sequence is Biotin synthase (309 aa).

One can recognise a Radical SAM core domain in the interval Asn-35 to Ser-259. [4Fe-4S] cluster is bound by residues Cys-50, Cys-54, and Cys-57. [2Fe-2S] cluster-binding residues include Cys-94, Cys-125, Cys-185, and Arg-257.

The protein belongs to the radical SAM superfamily. Biotin synthase family. Homodimer. [4Fe-4S] cluster serves as cofactor. It depends on [2Fe-2S] cluster as a cofactor.

It carries out the reaction (4R,5S)-dethiobiotin + (sulfur carrier)-SH + 2 reduced [2Fe-2S]-[ferredoxin] + 2 S-adenosyl-L-methionine = (sulfur carrier)-H + biotin + 2 5'-deoxyadenosine + 2 L-methionine + 2 oxidized [2Fe-2S]-[ferredoxin]. Its pathway is cofactor biosynthesis; biotin biosynthesis; biotin from 7,8-diaminononanoate: step 2/2. Functionally, catalyzes the conversion of dethiobiotin (DTB) to biotin by the insertion of a sulfur atom into dethiobiotin via a radical-based mechanism. In Rickettsia felis (strain ATCC VR-1525 / URRWXCal2) (Rickettsia azadi), this protein is Biotin synthase.